Reading from the N-terminus, the 293-residue chain is Protoheme IX farnesyltransferase (293 aa).

9 consecutive transmembrane segments (helical) span residues Leu-9–Ala-29, Tyr-38–Leu-58, Phe-86–Gly-106, Leu-111–Trp-131, Ile-137–Thr-157, Trp-167–Phe-187, Ile-211–Gly-231, Ser-234–Tyr-254, and Ile-271–Ile-291.

This sequence belongs to the UbiA prenyltransferase family. Protoheme IX farnesyltransferase subfamily.

The protein localises to the cell inner membrane. It carries out the reaction heme b + (2E,6E)-farnesyl diphosphate + H2O = Fe(II)-heme o + diphosphate. It functions in the pathway porphyrin-containing compound metabolism; heme O biosynthesis; heme O from protoheme: step 1/1. Functionally, converts heme B (protoheme IX) to heme O by substitution of the vinyl group on carbon 2 of heme B porphyrin ring with a hydroxyethyl farnesyl side group. In Blochmanniella floridana, this protein is Protoheme IX farnesyltransferase.